The chain runs to 164 residues: Ribosome maturation factor RimP (164 aa).

Belongs to the RimP family.

The protein localises to the cytoplasm. In terms of biological role, required for maturation of 30S ribosomal subunits. In Thermodesulfovibrio yellowstonii (strain ATCC 51303 / DSM 11347 / YP87), this protein is Ribosome maturation factor RimP.